The following is a 78-amino-acid chain: ATP synthase subunit c (78 aa).

The next 2 membrane-spanning stretches (helical) occupy residues 16–36 (LATL…ASFL) and 57–77 (MALA…ILFV).

Belongs to the ATPase C chain family. F-type ATPases have 2 components, F(1) - the catalytic core - and F(0) - the membrane proton channel. F(1) has five subunits: alpha(3), beta(3), gamma(1), delta(1), epsilon(1). F(0) has three main subunits: a(1), b(2) and c(10-14). The alpha and beta chains form an alternating ring which encloses part of the gamma chain. F(1) is attached to F(0) by a central stalk formed by the gamma and epsilon chains, while a peripheral stalk is formed by the delta and b chains.

It is found in the cell inner membrane. Its function is as follows. F(1)F(0) ATP synthase produces ATP from ADP in the presence of a proton or sodium gradient. F-type ATPases consist of two structural domains, F(1) containing the extramembraneous catalytic core and F(0) containing the membrane proton channel, linked together by a central stalk and a peripheral stalk. During catalysis, ATP synthesis in the catalytic domain of F(1) is coupled via a rotary mechanism of the central stalk subunits to proton translocation. In terms of biological role, key component of the F(0) channel; it plays a direct role in translocation across the membrane. A homomeric c-ring of between 10-14 subunits forms the central stalk rotor element with the F(1) delta and epsilon subunits. This is ATP synthase subunit c from Hyphomonas neptunium (strain ATCC 15444).